Here is a 739-residue protein sequence, read N- to C-terminus: Polyphosphate kinase (739 aa).

A disordered region spans residues Trp22 to Pro45. Residues Ser27–Ser40 are compositionally biased toward low complexity. Asn87 is an ATP binding site. 2 residues coordinate Mg(2+): Arg428 and Arg458. Catalysis depends on His488, which acts as the Phosphohistidine intermediate. ATP contacts are provided by Tyr521, Arg621, and His649. Positions Gln714–Arg739 are disordered. A compositionally biased stretch (basic and acidic residues) spans Gln724–Arg739.

Belongs to the polyphosphate kinase 1 (PPK1) family. Mg(2+) serves as cofactor. In terms of processing, an intermediate of this reaction is the autophosphorylated ppk in which a phosphate is covalently linked to a histidine residue through a N-P bond.

It catalyses the reaction [phosphate](n) + ATP = [phosphate](n+1) + ADP. In terms of biological role, catalyzes the reversible transfer of the terminal phosphate of ATP to form a long-chain polyphosphate (polyP). The chain is Polyphosphate kinase from Mycobacterium leprae (strain TN).